A 915-amino-acid chain; its full sequence is MLPLGSEPALNELLLRKEEEWRALQAHRTQLQEAALQDTRSQLEEAQGKLRCLQEDFVYNLQVLEERDLELERYDAAFAQAREWEEARRAEVSELKIEAAKLRQALAREARKVEELQQQQQLAFQEHRLELERVHSDKNGEIDHHREQYENLKWTLERKLEELDGELALQRQELLLEFESKMRKREHEFRLQADNMSNTALSRELKVKLLHKELEALKEAGAKAAESLQRAEATNAELERKLQSRAGELQDLEAMSRARVKDLEDKLHSVQLTRKKEEETFKRKHEELDRLAREKDAVLVAVKGAHVEQLQELQTRVLELQAHCETLEAQLRRAEWRQADTAKEKDAAIDQLREDASTVKSAWDAQIAQLSKEMVSRDLQIQTLQEEEVKLKAQVARSQQDIERYKQQLSLAVERERSLERDQVQLGLDWQRRCDDIERDQIQKSEALIQGLSMAKSQVAAKLQETEQALQEQEVVLKAVTLERDQAVQALRMHGLPRPGAQMLLRQHEEEISKDFPSSEIQRLREQNTSLRNAIAQMRKEMEALSHQIPPPIQTAAESTDANQPDPEAGGDAATPDYVLALEAEIRTLKHKFKTLEKHLEDVLDPLKMSSPHAESQPSVRTSTETTGGSAQAGQAGGSVQAGQAGGSVQAGPVSSGLALRKLGDRVQLLNLLVTRLRQKVLREPLEPAALQRELPREVDQVHLEVLELRKQVAELGKHLRIAQHGGAEPSGRKQPPASDAVALGREDAKSAEDEAPSRHLGKHQPRSAQVGSRLDALQGPKTQHSIHTVTCKSPRQKEDRSPKPPQAPQHPEEHGRQSHSSSSFASGTLQDMWRLLDLGSSPSGVTSQGDSTPELPAPPAADRRPVKMQAGIATPGMKTAAQAKAKTTGASRSHPAKAKGCQRPPKIRNYNIMD.

The tract at residues Met-1–Gln-502 is centrosomal targeting domain. 4 coiled-coil regions span residues Val-92 to Glu-173, Leu-214 to Asp-422, Lys-456 to Glu-483, and Ile-521 to Gln-548. 3 disordered regions span residues Thr-555–Ala-574, Pro-606–Pro-653, and Gln-724–Asp-915. The microtubule binding domain stretch occupies residues Pro-606–Asp-915. Residues His-613 to Thr-627 show a composition bias toward polar residues. Low complexity predominate over residues Gly-628–Gly-652. Basic and acidic residues predominate over residues Gly-745–Ser-758. 3 stretches are compositionally biased toward polar residues: residues Pro-781–Ser-794, Ser-819–Leu-830, and Ser-841–Ser-852. Low complexity predominate over residues Lys-879–Ala-891.

As to quaternary structure, interacts with CEP63; the interaction is required for their location to proximal end of centrioles. Interacts with microtubules.

It is found in the cytoplasm. Its subcellular location is the cytoskeleton. The protein localises to the microtubule organizing center. The protein resides in the centrosome. It localises to the centriolar satellite. It is found in the centriole. Its subcellular location is the spindle. In terms of biological role, pleiotropic regulator of centriole duplication, mitosis, and ciliogenesis. Critical interface between centrosome and microtubule-mediated cellular processes. Centriole duplication protein required for recruitment of CEP63, CEP152, and PLK4 to the centrosome. Independent of its centrosomal targeting, localizes to and interacts with microtubules and regulates microtubule nucleation, stability, and mitotic progression. The protein is Coiled-coil domain-containing protein 57 of Homo sapiens (Human).